The following is a 301-amino-acid chain: N-acetylmuramic acid 6-phosphate etherase (301 aa).

The SIS domain occupies 57–220 (IAEAFRQGGR…TTGAMIRTGK (164 aa)). Glu85 functions as the Proton donor in the catalytic mechanism. Glu116 is an active-site residue.

Belongs to the GCKR-like family. MurNAc-6-P etherase subfamily. Homodimer.

The catalysed reaction is N-acetyl-D-muramate 6-phosphate + H2O = N-acetyl-D-glucosamine 6-phosphate + (R)-lactate. It participates in amino-sugar metabolism; 1,6-anhydro-N-acetylmuramate degradation. The protein operates within amino-sugar metabolism; N-acetylmuramate degradation. Its pathway is cell wall biogenesis; peptidoglycan recycling. In terms of biological role, specifically catalyzes the cleavage of the D-lactyl ether substituent of MurNAc 6-phosphate, producing GlcNAc 6-phosphate and D-lactate. Together with AnmK, is also required for the utilization of anhydro-N-acetylmuramic acid (anhMurNAc) either imported from the medium or derived from its own cell wall murein, and thus plays a role in cell wall recycling. The polypeptide is N-acetylmuramic acid 6-phosphate etherase (Photorhabdus laumondii subsp. laumondii (strain DSM 15139 / CIP 105565 / TT01) (Photorhabdus luminescens subsp. laumondii)).